The following is a 379-amino-acid chain: Anhydro-N-acetylmuramic acid kinase (379 aa).

9-16 (GTSADGVD) contributes to the ATP binding site.

This sequence belongs to the anhydro-N-acetylmuramic acid kinase family.

It carries out the reaction 1,6-anhydro-N-acetyl-beta-muramate + ATP + H2O = N-acetyl-D-muramate 6-phosphate + ADP + H(+). Its pathway is amino-sugar metabolism; 1,6-anhydro-N-acetylmuramate degradation. The protein operates within cell wall biogenesis; peptidoglycan recycling. Catalyzes the specific phosphorylation of 1,6-anhydro-N-acetylmuramic acid (anhMurNAc) with the simultaneous cleavage of the 1,6-anhydro ring, generating MurNAc-6-P. Is required for the utilization of anhMurNAc either imported from the medium or derived from its own cell wall murein, and thus plays a role in cell wall recycling. This chain is Anhydro-N-acetylmuramic acid kinase, found in Prochlorococcus marinus (strain MIT 9211).